Reading from the N-terminus, the 404-residue chain is MIWKEILIRYGELSTKGRNKMDFIRRLRENIRHAFADLGHLHIRTERDRMFIAIENDAQMQTLVTGLPKIFGIQSFSPVAACEKDMESMKQLAITIMETFKDQPYTFKVEVKRTDKTFPLESHAIQREIGGYVLPQFNNLSVKVKQPDIELRVEVRHDATYMMAQVIPGAGGMPVGSNGKSLLMLSGGIDSPVAGYLMMKRGVRLEAIHFFSPPYTSQNSLEKVKVLANELTKFGANIRLHVIPFTEIQVLIKEKVPSNVSMTTTRRMMLKVADQVREEIGALAIVTGESLGQVASQTLESLTAINAVTNTPILRPLISSDKLEIIELAEQIGTYETSIQPFEDCCTIFTPASPKTKPKLEKVEHYESFSDFDELIARAVKNREVYIFPKKEEEQQQDKFADLL.

The 106-residue stretch at 61 to 166 folds into the THUMP domain; the sequence is QTLVTGLPKI…HDATYMMAQV (106 aa). Residues 184-185, 209-210, R266, G288, and Q297 each bind ATP; these read ML and HF.

Belongs to the ThiI family.

It localises to the cytoplasm. It catalyses the reaction [ThiI sulfur-carrier protein]-S-sulfanyl-L-cysteine + a uridine in tRNA + 2 reduced [2Fe-2S]-[ferredoxin] + ATP + H(+) = [ThiI sulfur-carrier protein]-L-cysteine + a 4-thiouridine in tRNA + 2 oxidized [2Fe-2S]-[ferredoxin] + AMP + diphosphate. The catalysed reaction is [ThiS sulfur-carrier protein]-C-terminal Gly-Gly-AMP + S-sulfanyl-L-cysteinyl-[cysteine desulfurase] + AH2 = [ThiS sulfur-carrier protein]-C-terminal-Gly-aminoethanethioate + L-cysteinyl-[cysteine desulfurase] + A + AMP + 2 H(+). Its pathway is cofactor biosynthesis; thiamine diphosphate biosynthesis. Catalyzes the ATP-dependent transfer of a sulfur to tRNA to produce 4-thiouridine in position 8 of tRNAs, which functions as a near-UV photosensor. Also catalyzes the transfer of sulfur to the sulfur carrier protein ThiS, forming ThiS-thiocarboxylate. This is a step in the synthesis of thiazole, in the thiamine biosynthesis pathway. The sulfur is donated as persulfide by IscS. This is Probable tRNA sulfurtransferase from Lysinibacillus sphaericus (strain C3-41).